The following is a 218-amino-acid chain: Small ribosomal subunit protein uS4 (218 aa).

The S4 RNA-binding domain occupies 111–175 (RRLQTQVLRL…SPLKNESHPE (65 aa)). A disordered region spans residues 192–218 (KAAAEAKQAREKPPERGGGRRKRGGRR). Positions 198 to 209 (KQAREKPPERGG) are enriched in basic and acidic residues.

Belongs to the universal ribosomal protein uS4 family. In terms of assembly, part of the 30S ribosomal subunit. Contacts protein S5. The interaction surface between S4 and S5 is involved in control of translational fidelity.

Its function is as follows. One of the primary rRNA binding proteins, it binds directly to 16S rRNA where it nucleates assembly of the body of the 30S subunit. With S5 and S12 plays an important role in translational accuracy. The sequence is that of Small ribosomal subunit protein uS4 from Methanosarcina acetivorans (strain ATCC 35395 / DSM 2834 / JCM 12185 / C2A).